We begin with the raw amino-acid sequence, 117 residues long: uncharacterized protein (117 aa).

Residues 1–12 (MAQNSVSLSAGD) show a composition bias toward polar residues. Disordered regions lie at residues 1–30 (MAQN…NPSA) and 43–87 (VTRL…SPYP).

This is an uncharacterized protein from Mus musculus (Mouse).